A 319-amino-acid chain; its full sequence is Formimidoylglutamase (319 aa).

Mn(2+)-binding residues include H131, D154, H156, D158, C248, and D250.

It belongs to the arginase family. Mn(2+) is required as a cofactor.

It catalyses the reaction N-formimidoyl-L-glutamate + H2O = formamide + L-glutamate. The protein operates within amino-acid degradation; L-histidine degradation into L-glutamate; L-glutamate from N-formimidoyl-L-glutamate (hydrolase route): step 1/1. In terms of biological role, catalyzes the conversion of N-formimidoyl-L-glutamate to L-glutamate and formamide. In Legionella pneumophila subsp. pneumophila (strain Philadelphia 1 / ATCC 33152 / DSM 7513), this protein is Formimidoylglutamase.